The primary structure comprises 122 residues: UPF0102 protein Gmet_2864 (122 aa).

It belongs to the UPF0102 family.

The sequence is that of UPF0102 protein Gmet_2864 from Geobacter metallireducens (strain ATCC 53774 / DSM 7210 / GS-15).